The primary structure comprises 344 residues: D-arabinose dehydrogenase [NAD(P)+] heavy chain (344 aa).

The Proton donor role is filled by tyrosine 71. Histidine 131 provides a ligand contact to substrate. Threonine 151 is modified (phosphothreonine). Position 241–295 (241–295 (SPLGSHGAPNLKIPLVKKLAEKYNVTGNDLLISYHIRQGTIVIPRSLNPVRISSS)) interacts with NADP(+).

Belongs to the aldo/keto reductase family. As to quaternary structure, heterodimer of a heavy chain and a light chain.

It localises to the cytoplasm. The enzyme catalyses D-arabinose + NADP(+) = D-arabinono-1,4-lactone + NADPH + H(+). The catalysed reaction is D-arabinose + NAD(+) = D-arabinono-1,4-lactone + NADH + H(+). Functionally, catalyzes the oxidation of D-arabinose, L-xylose, L-fucose and L-galactose in the presence of NADP(+). The protein is D-arabinose dehydrogenase [NAD(P)+] heavy chain (ARA1) of Saccharomyces cerevisiae (strain ATCC 204508 / S288c) (Baker's yeast).